A 208-amino-acid polypeptide reads, in one-letter code: Holliday junction branch migration complex subunit RuvA (208 aa).

Residues Met1 to Arg64 are domain I. The tract at residues Ser65 to Val143 is domain II. Residues Ala144–Arg152 form a flexible linker region. The interval Thr153 to Arg208 is domain III.

This sequence belongs to the RuvA family. In terms of assembly, homotetramer. Forms an RuvA(8)-RuvB(12)-Holliday junction (HJ) complex. HJ DNA is sandwiched between 2 RuvA tetramers; dsDNA enters through RuvA and exits via RuvB. An RuvB hexamer assembles on each DNA strand where it exits the tetramer. Each RuvB hexamer is contacted by two RuvA subunits (via domain III) on 2 adjacent RuvB subunits; this complex drives branch migration. In the full resolvosome a probable DNA-RuvA(4)-RuvB(12)-RuvC(2) complex forms which resolves the HJ.

The protein localises to the cytoplasm. The RuvA-RuvB-RuvC complex processes Holliday junction (HJ) DNA during genetic recombination and DNA repair, while the RuvA-RuvB complex plays an important role in the rescue of blocked DNA replication forks via replication fork reversal (RFR). RuvA specifically binds to HJ cruciform DNA, conferring on it an open structure. The RuvB hexamer acts as an ATP-dependent pump, pulling dsDNA into and through the RuvAB complex. HJ branch migration allows RuvC to scan DNA until it finds its consensus sequence, where it cleaves and resolves the cruciform DNA. In Methylorubrum populi (strain ATCC BAA-705 / NCIMB 13946 / BJ001) (Methylobacterium populi), this protein is Holliday junction branch migration complex subunit RuvA.